We begin with the raw amino-acid sequence, 935 residues long: Epstein-Barr nuclear antigen 3 (935 aa).

Disordered regions lie at residues Met-1–Gly-89, His-342–Gly-373, Thr-399–Pro-446, Lys-611–Pro-634, and His-883–Pro-908. The segment covering Ala-10 to Val-19 has biased composition (acidic residues). The span at Pro-20–Val-29 shows a compositional bias: polar residues. Positions Glu-352 to Leu-366 are enriched in acidic residues. The segment covering Thr-399 to Arg-410 has biased composition (basic and acidic residues). The segment covering Ser-431–Ser-440 has biased composition (polar residues). Positions Val-615–Pro-630 are enriched in low complexity.

This sequence belongs to the herpesviridae EBNA-3 family. In terms of assembly, interacts with human UCKL1. Interacts with host CTPB1; this interaction seems important for EBNA3-mediated transcriptional repression. Interacts with host RBPJ. Interacts with host USP12 and WDR48; these interactions form a deubiquitination-competent complex.

The protein resides in the host nucleus matrix. In terms of biological role, plays an essential role for activation and immortalization of human B-cells. Represses transcription of viral promoters TP1 and Cp through interaction with host RBPJ, and inhibits EBNA2-mediated activation of these promoters. Since Cp is the promoter for all EBNA mRNAs, EBNA3A probably contributes to a negative autoregulatory control loop. The polypeptide is Epstein-Barr nuclear antigen 3 (EBNA3) (Homo sapiens (Human)).